Consider the following 553-residue polypeptide: Methyl-coenzyme M reductase II subunit alpha (553 aa).

Position 150 (glutamine 150) interacts with coenzyme F430. Coenzyme B contacts are provided by residues arginine 228, 259–260, and arginine 273; that span reads KH. Pros-methylhistidine is present on histidine 260. Arginine 274 is subject to 5-methylarginine. Tyrosine 335 serves as a coordination point for coenzyme M. A 2-methylglutamine modification is found at glutamine 402. Tyrosine 446 provides a ligand contact to coenzyme M. A 1-thioglycine modification is found at glycine 447. Aspartate 452 is subject to (Z)-2,3-didehydroaspartate. Cysteine 454 is modified (S-methylcysteine).

Belongs to the methyl-coenzyme M reductase alpha subunit family. MCR is a hexamer of two alpha, two beta, and two gamma chains, forming a dimer of heterotrimers. Requires coenzyme F430 as cofactor. The alpha subunit contains six modified amino acids near the active site region. Is methylated on His-260, Arg-274, Gln-402 and Cys-454, probably by the action of specific S-adenosylmethionine-dependent methyltransferases. Also contains a thioglycine at position 447, forming a thiopeptide bond. Contains a didehydroaspartate residue at position 452. The methylation on C5 of Arg-274 is a post-translational methylation not essential in vivo, but which plays a role for the stability and structural integrity of MCR.

The enzyme catalyses coenzyme B + methyl-coenzyme M = methane + coenzyme M-coenzyme B heterodisulfide. The protein operates within one-carbon metabolism; methyl-coenzyme M reduction; methane from methyl-coenzyme M: step 1/1. Component of the methyl-coenzyme M reductase (MCR) I that catalyzes the reductive cleavage of methyl-coenzyme M (CoM-S-CH3 or 2-(methylthio)ethanesulfonate) using coenzyme B (CoB or 7-mercaptoheptanoylthreonine phosphate) as reductant which results in the production of methane and the mixed heterodisulfide of CoB and CoM (CoM-S-S-CoB). This is the final step in methanogenesis. This is Methyl-coenzyme M reductase II subunit alpha (mrtA) from Methanothermobacter marburgensis (strain ATCC BAA-927 / DSM 2133 / JCM 14651 / NBRC 100331 / OCM 82 / Marburg) (Methanobacterium thermoautotrophicum).